We begin with the raw amino-acid sequence, 104 residues long: Large ribosomal subunit protein uL24 (104 aa).

Residues 85–96 are compositionally biased toward basic and acidic residues; it reads IKRELGAKEKAR. Residues 85–104 form a disordered region; that stretch reads IKRELGAKEKARADRRKTAK.

The protein belongs to the universal ribosomal protein uL24 family. Part of the 50S ribosomal subunit.

Functionally, one of two assembly initiator proteins, it binds directly to the 5'-end of the 23S rRNA, where it nucleates assembly of the 50S subunit. In terms of biological role, one of the proteins that surrounds the polypeptide exit tunnel on the outside of the subunit. This Anaeromyxobacter sp. (strain Fw109-5) protein is Large ribosomal subunit protein uL24.